The primary structure comprises 289 residues: CRISPR-associated endoribonuclease Cas6 2 (289 aa).

This sequence belongs to the CRISPR-associated endoribonuclease Cas6 family. Possibly part of the aCascade ribonucleoprotein complex. Mg(2+) is required as a cofactor.

In terms of biological role, CRISPR (clustered regularly interspaced short palindromic repeat) is an adaptive immune system that provides protection against mobile genetic elements (viruses, transposable elements and conjugative plasmids). CRISPR clusters contain sequences complementary to antecedent mobile elements and target invading nucleic acids. CRISPR clusters are transcribed and processed into CRISPR RNA (crRNA). Functions as a ssRNA-specific endoribonuclease, generating an 8 base-long tag known as the 5' handle. This Saccharolobus solfataricus (strain ATCC 35092 / DSM 1617 / JCM 11322 / P2) (Sulfolobus solfataricus) protein is CRISPR-associated endoribonuclease Cas6 2 (cas6b).